We begin with the raw amino-acid sequence, 174 residues long: Peptide deformylase (174 aa).

Residues Cys98 and His140 each coordinate Fe cation. Glu141 is a catalytic residue. His144 is a binding site for Fe cation.

It belongs to the polypeptide deformylase family. It depends on Fe(2+) as a cofactor.

The catalysed reaction is N-terminal N-formyl-L-methionyl-[peptide] + H2O = N-terminal L-methionyl-[peptide] + formate. Its function is as follows. Removes the formyl group from the N-terminal Met of newly synthesized proteins. Requires at least a dipeptide for an efficient rate of reaction. N-terminal L-methionine is a prerequisite for activity but the enzyme has broad specificity at other positions. This Bradyrhizobium diazoefficiens (strain JCM 10833 / BCRC 13528 / IAM 13628 / NBRC 14792 / USDA 110) protein is Peptide deformylase.